Reading from the N-terminus, the 213-residue chain is Probable nicotinate-nucleotide adenylyltransferase (213 aa).

This sequence belongs to the NadD family.

The catalysed reaction is nicotinate beta-D-ribonucleotide + ATP + H(+) = deamido-NAD(+) + diphosphate. It participates in cofactor biosynthesis; NAD(+) biosynthesis; deamido-NAD(+) from nicotinate D-ribonucleotide: step 1/1. Functionally, catalyzes the reversible adenylation of nicotinate mononucleotide (NaMN) to nicotinic acid adenine dinucleotide (NaAD). The chain is Probable nicotinate-nucleotide adenylyltransferase from Citrobacter koseri (strain ATCC BAA-895 / CDC 4225-83 / SGSC4696).